Consider the following 323-residue polypeptide: Beta-ketoacyl-[acyl-carrier-protein] synthase III (323 aa).

Active-site residues include Cys114 and His250. The segment at 251–255 (QANLR) is ACP-binding. Residue Asn280 is part of the active site.

The protein belongs to the thiolase-like superfamily. FabH family. As to quaternary structure, homodimer.

It localises to the cytoplasm. It catalyses the reaction malonyl-[ACP] + acetyl-CoA + H(+) = 3-oxobutanoyl-[ACP] + CO2 + CoA. It participates in lipid metabolism; fatty acid biosynthesis. Its function is as follows. Catalyzes the condensation reaction of fatty acid synthesis by the addition to an acyl acceptor of two carbons from malonyl-ACP. Catalyzes the first condensation reaction which initiates fatty acid synthesis and may therefore play a role in governing the total rate of fatty acid production. Possesses both acetoacetyl-ACP synthase and acetyl transacylase activities. Its substrate specificity determines the biosynthesis of branched-chain and/or straight-chain of fatty acids. The protein is Beta-ketoacyl-[acyl-carrier-protein] synthase III of Cereibacter sphaeroides (strain ATCC 17029 / ATH 2.4.9) (Rhodobacter sphaeroides).